The chain runs to 257 residues: Dihydroorotate dehydrogenase B (NAD(+)), electron transfer subunit (257 aa).

The region spanning 2–102 is the FAD-binding FR-type domain; the sequence is IGRERMTVAS…LGPLGNGFPL (101 aa). Residues 53–56, 70–72, and 77–78 each bind FAD; these read RPLS, IYR, and GT. [2Fe-2S] cluster-binding residues include cysteine 221, cysteine 226, cysteine 229, and cysteine 244.

The protein belongs to the PyrK family. Heterotetramer of 2 PyrK and 2 PyrD type B subunits. Requires [2Fe-2S] cluster as cofactor. The cofactor is FAD.

It functions in the pathway pyrimidine metabolism; UMP biosynthesis via de novo pathway; orotate from (S)-dihydroorotate (NAD(+) route): step 1/1. Its function is as follows. Responsible for channeling the electrons from the oxidation of dihydroorotate from the FMN redox center in the PyrD type B subunit to the ultimate electron acceptor NAD(+). The sequence is that of Dihydroorotate dehydrogenase B (NAD(+)), electron transfer subunit from Geobacillus kaustophilus (strain HTA426).